The chain runs to 630 residues: uncharacterized protein (630 aa).

A run of 2 helical transmembrane segments spans residues 8 to 28 (LFNMFRLLAAILVFTGLASAV) and 258 to 278 (VDNSFLYTFAPYVFSSAPLVI). The segment at 399-426 (EETSKPTEQPSPADSTSTPAAPEKGAAS) is disordered. Polar residues predominate over residues 404–417 (PTEQPSPADSTSTP).

It belongs to the peptidase S1C family.

It localises to the cell membrane. This is an uncharacterized protein from Sinorhizobium fredii (strain NBRC 101917 / NGR234).